Consider the following 291-residue polypeptide: Proteasome subunit beta (291 aa).

A propeptide spans 1 to 56 (MTRSFPDRLPTNLAFPGISVINQSSFVDLLRRQAPELLPVSLGGGQSGGGQQLSHG) (removed in mature form; by autocatalysis). The active-site Nucleophile is Thr57.

Belongs to the peptidase T1B family. The 20S proteasome core is composed of 14 alpha and 14 beta subunits that assemble into four stacked heptameric rings, resulting in a barrel-shaped structure. The two inner rings, each composed of seven catalytic beta subunits, are sandwiched by two outer rings, each composed of seven alpha subunits. The catalytic chamber with the active sites is on the inside of the barrel. Has a gated structure, the ends of the cylinder being occluded by the N-termini of the alpha-subunits. Is capped by the proteasome-associated ATPase, ARC.

Its subcellular location is the cytoplasm. It catalyses the reaction Cleavage of peptide bonds with very broad specificity.. Its pathway is protein degradation; proteasomal Pup-dependent pathway. The formation of the proteasomal ATPase ARC-20S proteasome complex, likely via the docking of the C-termini of ARC into the intersubunit pockets in the alpha-rings, may trigger opening of the gate for substrate entry. Interconversion between the open-gate and close-gate conformations leads to a dynamic regulation of the 20S proteasome proteolysis activity. Component of the proteasome core, a large protease complex with broad specificity involved in protein degradation. This chain is Proteasome subunit beta, found in Mycobacterium leprae (strain Br4923).